We begin with the raw amino-acid sequence, 509 residues long: H/ACA ribonucleoprotein complex subunit DKC1 (509 aa).

The tract at residues 1–25 (MADAEAAMTFPKKHKKKKERKPLPE) is disordered. An N-acetylalanine modification is found at A2. Positions 2–22 (ADAEAAMTFPKKHKKKKERKP) are nucleolar localization. Positions 11 to 20 (PKKHKKKKER) are enriched in basic residues. Residues K21, K40, and K44 each participate in a glycyl lysine isopeptide (Lys-Gly) (interchain with G-Cter in SUMO2) cross-link. Catalysis depends on D126, which acts as the Nucleophile. Residue K192 forms a Glycyl lysine isopeptide (Lys-Gly) (interchain with G-Cter in SUMO2) linkage. Residues 297–372 (HKRLVMKDSA…VVAKIKRVIM (76 aa)) form the PUA domain. A disordered region spans residues 381-509 (WGLGPKASQK…KARAAEELSG (129 aa)). S388 is subject to Phosphoserine. Residues K395 and K425 each participate in a glycyl lysine isopeptide (Lys-Gly) (interchain with G-Cter in SUMO2) cross-link. A compositionally biased stretch (basic and acidic residues) spans 416–425 (DYVDYSDSSK). The interval 447 to 509 (KRKRDSDSDA…KARAAEELSG (63 aa)) is nuclear and nucleolar localization. Phosphoserine is present on residues S452 and S454. Position 460 is a phosphothreonine (T460). A compositionally biased stretch (basic residues) spans 466–475 (RVKKEKKKKK). Over residues 481–490 (GEEAAEDGDG) the composition is skewed to acidic residues. S508 is modified (phosphoserine).

This sequence belongs to the pseudouridine synthase TruB family. In terms of assembly, part of the H/ACA small nucleolar ribonucleoprotein (H/ACA snoRNP) complex, which contains NHP2/NOLA2, GAR1/NOLA1, NOP10/NOLA3, and DKC1/NOLA4, which is presumed to be the catalytic subunit. The complex contains a stable core formed by binding of one or two NOP10-DKC1 heterodimers to NHP2; GAR1 subsequently binds to this core via DKC1. The complex binds a box H/ACA small nucleolar RNA (snoRNA), which may target the specific site of modification within the RNA substrate. During assembly, the complex contains NAF1 instead of GAR1/NOLA1. The complex also interacts with TERC, which contains a 3'-terminal domain related to the box H/ACA snoRNAs. Specific interactions with snoRNAs or TERC are mediated by GAR1 and NHP2. Associates with NOLC1/NOPP140. H/ACA snoRNPs interact with the SMN complex, consisting of SMN1 or SMN2, GEMIN2/SIP1, DDX20/GEMIN3, and GEMIN4. This is mediated by interaction between GAR1 and SMN1 or SMN2. The SMN complex may be required for correct assembly of the H/ACA snoRNP complex. Component of the telomerase holoenzyme complex composed of one molecule of TERT, one molecule of WRAP53/TCAB1, two molecules of H/ACA ribonucleoprotein complex subunits DKC1, NOP10, NHP2 and GAR1, and a telomerase RNA template component (TERC). The telomerase holoenzyme complex is associated with TEP1, SMG6/EST1A and POT1. Interacts with SHQ1; this interaction may lead to the stabilization of DKC1, from the time of its synthesis until its association with NOP10, NHP2, and NAF1 at the nascent H/ACA RNA. Interacts with HMBOX1. Interacts with DHX36.

The protein localises to the nucleus. It is found in the nucleolus. Its subcellular location is the cajal body. The enzyme catalyses uridine in 5S rRNA = pseudouridine in 5S rRNA. In terms of biological role, catalytic subunit of H/ACA small nucleolar ribonucleoprotein (H/ACA snoRNP) complex, which catalyzes pseudouridylation of rRNA. This involves the isomerization of uridine such that the ribose is subsequently attached to C5, instead of the normal N1. Each rRNA can contain up to 100 pseudouridine ('psi') residues, which may serve to stabilize the conformation of rRNAs. Required for ribosome biogenesis and telomere maintenance. Also required for correct processing or intranuclear trafficking of TERC, the RNA component of the telomerase reverse transcriptase (TERT) holoenzyme. The sequence is that of H/ACA ribonucleoprotein complex subunit DKC1 (Dkc1) from Rattus norvegicus (Rat).